Consider the following 469-residue polypeptide: Sulfate adenylyltransferase subunit 1 (469 aa).

Residues 22-237 enclose the tr-type G domain; that stretch reads KEVLRFITCG…LEEVPVKSEE (216 aa). Residues 31 to 38 are G1; it reads GSVDDGKS. 31–38 serves as a coordination point for GTP; the sequence is GSVDDGKS. Positions 89–93 are G2; sequence GITID. The tract at residues 110-113 is G3; it reads DTPG. Residues 110 to 114 and 165 to 168 each bind GTP; these read DTPGH and NKMD. The G4 stretch occupies residues 165-168; sequence NKMD. Positions 202–204 are G5; the sequence is SAK.

Belongs to the TRAFAC class translation factor GTPase superfamily. Classic translation factor GTPase family. CysN/NodQ subfamily. As to quaternary structure, heterodimer composed of CysD, the smaller subunit, and CysN.

It catalyses the reaction sulfate + ATP + H(+) = adenosine 5'-phosphosulfate + diphosphate. Its pathway is sulfur metabolism; hydrogen sulfide biosynthesis; sulfite from sulfate: step 1/3. In terms of biological role, with CysD forms the ATP sulfurylase (ATPS) that catalyzes the adenylation of sulfate producing adenosine 5'-phosphosulfate (APS) and diphosphate, the first enzymatic step in sulfur assimilation pathway. APS synthesis involves the formation of a high-energy phosphoric-sulfuric acid anhydride bond driven by GTP hydrolysis by CysN coupled to ATP hydrolysis by CysD. In Methylorubrum extorquens (strain PA1) (Methylobacterium extorquens), this protein is Sulfate adenylyltransferase subunit 1.